We begin with the raw amino-acid sequence, 173 residues long: Ribosome maturation factor RimM (173 aa).

Residues 98–171 (DDQYYYDEII…LITIDALEGL (74 aa)) enclose the PRC barrel domain.

The protein belongs to the RimM family. Binds ribosomal protein uS19.

The protein resides in the cytoplasm. An accessory protein needed during the final step in the assembly of 30S ribosomal subunit, possibly for assembly of the head region. Essential for efficient processing of 16S rRNA. May be needed both before and after RbfA during the maturation of 16S rRNA. It has affinity for free ribosomal 30S subunits but not for 70S ribosomes. This chain is Ribosome maturation factor RimM, found in Leuconostoc mesenteroides subsp. mesenteroides (strain ATCC 8293 / DSM 20343 / BCRC 11652 / CCM 1803 / JCM 6124 / NCDO 523 / NBRC 100496 / NCIMB 8023 / NCTC 12954 / NRRL B-1118 / 37Y).